The chain runs to 506 residues: Tyrosine-protein phosphatase non-receptor type substrate 1 (506 aa).

Residues 1-29 form the signal peptide; it reads MEPARPAPGRLRPLLCLLLAASNAWTGTA. The region spanning 30-145 is the Ig-like V-type domain; sequence GDGELQVIQP…SGPGTHLTVS (116 aa). At 30–371 the chain is on the extracellular side; sequence GDGELQVIQP…PGPNDSNWTS (342 aa). The cysteines at positions 55 and 121 are disulfide-linked. Residue Asn-92 is glycosylated (N-linked (GlcNAc...) asparagine). The tract at residues 136–159 is disordered; that stretch reads SGPGTHLTVSAKPSPPVLSGPTVR. 2 consecutive Ig-like C1-type domains span residues 148–248 and 255–348; these read PSPP…ANLS and PTLE…HTLE. Asn-167, Asn-179, Asn-204, Asn-210, Asn-246, Asn-270, Asn-292, Asn-311, Asn-319, Asn-344, Asn-365, and Asn-368 each carry an N-linked (GlcNAc...) asparagine glycan. A disulfide bridge links Cys-170 with Cys-228. A disulfide bond links Cys-273 and Cys-331. The segment at 344-364 is disordered; it reads NHTLEVSAPQKDQDTGQTPGP. Residues 372–392 form a helical membrane-spanning segment; that stretch reads IFIVVGVVCALLVALLIAALY. At 393–506 the chain is on the cytoplasmic side; it reads LLRIRQNKAK…EYASVQVQRK (114 aa). The segment at 402–468 is disordered; sequence KGSTSSTRLH…QARPPPVSED (67 aa). Residues 409–418 show a composition bias toward basic and acidic residues; the sequence is RLHEPEKNTR. Positions 419–429 are enriched in polar residues; the sequence is ETTQIQDNNDI. Tyr-431 is subject to Phosphotyrosine; by Tyr-kinases. The short motif at 432–435 is the SH2-binding element; sequence ADLN. Positions 441-446 match the SH3-binding motif; sequence KSTPKA. A compositionally biased stretch (polar residues) spans 444–456; that stretch reads PKANEPNNHTEYA. A phosphotyrosine; by Tyr-kinases mark is found at Tyr-455, Tyr-472, and Tyr-498. 3 consecutive short sequence motifs (SH2-binding) follow at residues 455-458, 472-475, and 498-501; these read YASI, YADL, and YASV. The segment at 480–506 is disordered; sequence LNRTPKQPAPKPEPSYSEYASVQVQRK. Positions 497–506 are enriched in polar residues; that stretch reads EYASVQVQRK.

Binds PTPN11 when tyrosine-phosphorylated, except in macrophages, where it primarily binds PTPN6. Binds GRB2 in vitro. Binds JAK2 irrespective of its phosphorylation status and forms a stable complex. Binds SCAP1 and/or SCAP2. The resulting complex recruits FYB1. Binds FGR and PTK2B. Interacts with TRIM2. In terms of processing, phosphorylated on tyrosine residues. Highly expressed in spleen macrophages. Detected in skin dendritic cells.

It localises to the membrane. In terms of biological role, immunoglobulin-like cell surface receptor for CD47. Acts as docking protein and induces translocation of PTPN6, PTPN11 and other binding partners from the cytosol to the plasma membrane. Supports adhesion of cerebellar neurons, neurite outgrowth and glial cell attachment. May play a key role in intracellular signaling during synaptogenesis and in synaptic function. Involved in the negative regulation of receptor tyrosine kinase-coupled cellular responses induced by cell adhesion, growth factors or insulin. Mediates negative regulation of phagocytosis, mast cell activation and dendritic cell activation. CD47 binding prevents maturation of immature dendritic cells and inhibits cytokine production by mature dendritic cells. Plays a role in antiviral immunity and limits new world arenavirus infection by decreasing virus internalization. Receptor for THBS1. Interaction with THBS1 stimulates phosphorylation of SIRPA. In response to THBS1, involved in ROS signaling in non-phagocytic cells, stimulating NADPH oxidase-derived ROS production. The chain is Tyrosine-protein phosphatase non-receptor type substrate 1 (SIRPA) from Bos taurus (Bovine).